We begin with the raw amino-acid sequence, 166 residues long: Large ribosomal subunit protein uL10 (166 aa).

Belongs to the universal ribosomal protein uL10 family. As to quaternary structure, part of the ribosomal stalk of the 50S ribosomal subunit. The N-terminus interacts with L11 and the large rRNA to form the base of the stalk. The C-terminus forms an elongated spine to which L12 dimers bind in a sequential fashion forming a multimeric L10(L12)X complex.

Its function is as follows. Forms part of the ribosomal stalk, playing a central role in the interaction of the ribosome with GTP-bound translation factors. In Geobacillus sp. (strain WCH70), this protein is Large ribosomal subunit protein uL10.